The chain runs to 562 residues: Laccase-2 (562 aa).

Positions Met1 to Ala26 are cleaved as a signal peptide. Plastocyanin-like domains follow at residues Asp34–Gly150 and Asp160–Val312. N-linked (GlcNAc...) asparagine glycans are attached at residues Asn39, Asn53, Asn72, and Asn80. His84 and His86 together coordinate Cu cation. N-linked (GlcNAc...) asparagine glycosylation occurs at Asn118. Residues His129 and His131 each coordinate Cu cation. N-linked (GlcNAc...) asparagine glycosylation is found at Asn189, Asn244, Asn300, Asn328, Asn376, Asn386, Asn421, and Asn445. Residues Asp411–Ser546 form the Plastocyanin-like 3 domain. Cu cation is bound by residues His463, His466, His468, His525, Cys526, His527, and His531.

Belongs to the multicopper oxidase family. Cu cation serves as cofactor.

The protein localises to the secreted. It is found in the extracellular space. It localises to the apoplast. The enzyme catalyses 4 hydroquinone + O2 = 4 benzosemiquinone + 2 H2O. In terms of biological role, lignin degradation and detoxification of lignin-derived products. This is Laccase-2 (LAC2) from Oryza sativa subsp. japonica (Rice).